Here is a 356-residue protein sequence, read N- to C-terminus: RuBisCO accumulation factor 1 (356 aa).

The tract at residues 7–185 (ALTTEVLQRL…RQALEKLLTD (179 aa)) is N-terminal alpha-helix. Residues 209–342 (PYLVPVAGTA…LLLVLRPPQV (134 aa)) are C-terminal beta-sheet.

Belongs to the RAF family. As to quaternary structure, homodimer. Forms an RbcL(8)-Raf1(8) complex. Forms complexes of many stoichiometries with RbcL with and without RbcS. RbcX and Raf1 can bind simultaneously to RbcL.

The protein resides in the cytoplasm. A major RuBisCO chaperone. Acts after GroEL-GroES chaperonin to fold and/or assemble the large subunit of RuBisCO (ccbL, rbcL). Cooperates with RbcX in RbcL folding, plays the major role in assembly of dimers into RbcL(8)-Raf1(8) intermediate complexes. RbcS replaces Raf1, leading to holoenzyme formation. In terms of biological role, required for optimal reconstitution of RuBisCO upon expression of rbcL-rbcS subunits in E.coli. Only interacts with the large subunit (cbbL, rbcL). Probably acts in the final stages of RuBisCO assembly, possibly participating in the addition of the small subunit (ccbS, rbcS). The sequence is that of RuBisCO accumulation factor 1 from Thermosynechococcus vestitus (strain NIES-2133 / IAM M-273 / BP-1).